Here is a 380-residue protein sequence, read N- to C-terminus: Cytochrome b (380 aa).

4 consecutive transmembrane segments (helical) span residues 34 to 54 (SGSL…FLAM), 78 to 99 (WFLR…YCHI), 114 to 134 (WNVG…GYVL), and 179 to 199 (FFPF…IHLV). Heme b-binding residues include histidine 84 and histidine 98. Heme b is bound by residues histidine 183 and histidine 197. Histidine 202 serves as a coordination point for a ubiquinone. The next 4 helical transmembrane spans lie at 227–247 (TKDT…ALLF), 289–309 (LGGV…PLLN), 321–341 (LSQA…WIGS), and 348–369 (YVLL…GFPI).

It belongs to the cytochrome b family. As to quaternary structure, the main subunits of complex b-c1 are: cytochrome b, cytochrome c1 and the Rieske protein. Heme b serves as cofactor.

The protein resides in the mitochondrion inner membrane. In terms of biological role, component of the ubiquinol-cytochrome c reductase complex (complex III or cytochrome b-c1 complex) that is part of the mitochondrial respiratory chain. The b-c1 complex mediates electron transfer from ubiquinol to cytochrome c. Contributes to the generation of a proton gradient across the mitochondrial membrane that is then used for ATP synthesis. In Strongylocentrotus purpuratus (Purple sea urchin), this protein is Cytochrome b (MT-CYB).